Reading from the N-terminus, the 319-residue chain is Meiotic drive suppressor wtf16 (319 aa).

Disordered regions lie at residues 1–22 (MKNNYTSLKSPIDEGDESKTGH) and 35–68 (DSEEEGALPPYSDHARVSNSPNTHRENNPSRSTD). 6 helical membrane passes run 73 to 93 (FLIKLLISFTPIYVLNVLAIC), 110 to 130 (WTLFGFWCLVCTLALIFLTYF), 153 to 173 (VVIIWLLWVVICFVLFGCIKF), 187 to 207 (CSISAALLLFLLYVRLPFWTL), 215 to 235 (FQVLGVQSCVVIVTKGLMYLF), and 241 to 261 (ATGYEIEATSLFVIGNFFFFY).

The protein belongs to the WTF family. Homomer. Interacts with other proteins that exhibit high sequence similarity.

It localises to the spore membrane. The protein resides in the vacuole membrane. Acts as a suppressor component of the dual wtf meiotic drive system, and can suppress but not confer meiotic drive by compatible poisons. Wtf meiotic drive systems promote unequal transmission of alleles from the parental zygote to progeny spores by encoding a poison and an antidote from the same locus; the poison is trans-acting and forms toxic aggregates in all spores within an ascus, wherease the antidote is spore-specific and targets aggregates for degradation by the vacuole. Meiotic drive by wtf systems therefore lead to poisoning of all progeny that do not inherit the dual poison/antidote allele, or express a compatible antidote. This is Meiotic drive suppressor wtf16 from Schizosaccharomyces pombe (strain 972 / ATCC 24843) (Fission yeast).